The chain runs to 152 residues: Urease accessory protein UreE (152 aa).

Belongs to the UreE family.

It is found in the cytoplasm. Its function is as follows. Involved in urease metallocenter assembly. Binds nickel. Probably functions as a nickel donor during metallocenter assembly. This is Urease accessory protein UreE from Enterobacter sp. (strain 638).